The following is a 280-amino-acid chain: Phosphonates import ATP-binding protein PhnC 1 (280 aa).

The region spanning 2–246 is the ABC transporter domain; sequence LRIENLDKRY…VLTRIYGEED (245 aa). 35 to 42 serves as a coordination point for ATP; it reads GPSGAGKS. Residues 247–266 are disordered; that stretch reads WSKTSDEDADSVDAPPRAAD.

Belongs to the ABC transporter superfamily. Phosphonates importer (TC 3.A.1.9.1) family. The complex is composed of two ATP-binding proteins (PhnC), two transmembrane proteins (PhnE) and a solute-binding protein (PhnD).

It localises to the cell inner membrane. The enzyme catalyses phosphonate(out) + ATP + H2O = phosphonate(in) + ADP + phosphate + H(+). In terms of biological role, part of the ABC transporter complex PhnCDE involved in phosphonates import. Responsible for energy coupling to the transport system. In Rhodopseudomonas palustris (strain HaA2), this protein is Phosphonates import ATP-binding protein PhnC 1.